The following is a 341-amino-acid chain: Shk1 kinase-binding protein 15 (341 aa).

WD repeat units follow at residues 33–70 (AHEG…QIAD), 77–114 (IANA…LVHT), 119–157 (SHKG…GGKV), 197–234 (SSKS…ILHE), and 237–274 (AHKK…VIEH). The interval 293–341 (NSEPKNVEDEAAKRQSLDSETSETSSESESESEYYSTSKQPPVKRTKHA) is disordered. Over residues 297 to 309 (KNVEDEAAKRQSL) the composition is skewed to basic and acidic residues.

In terms of biological role, negatively regulates pak1/shk1 kinase activity leading to proper execution of cytoskeletal remodeling and cytokinetic functions. Interacts with pak1/shk1. This chain is Shk1 kinase-binding protein 15 (skb15), found in Schizosaccharomyces pombe (strain 972 / ATCC 24843) (Fission yeast).